A 267-amino-acid polypeptide reads, in one-letter code: tRNA pseudouridine synthase A (267 aa).

Catalysis depends on aspartate 55, which acts as the Nucleophile. Substrate is bound at residue tyrosine 111.

Belongs to the tRNA pseudouridine synthase TruA family.

It carries out the reaction uridine(38/39/40) in tRNA = pseudouridine(38/39/40) in tRNA. Its function is as follows. Formation of pseudouridine at positions 38, 39 and 40 in the anticodon stem and loop of transfer RNAs. The sequence is that of tRNA pseudouridine synthase A from Thermococcus gammatolerans (strain DSM 15229 / JCM 11827 / EJ3).